The chain runs to 323 residues: Large ribosomal subunit protein uL10 (323 aa).

The disordered stretch occupies residues 296–323; the sequence is AAPAAPSAAAKEEPEESDEDDFGMGGLF. Positions 308–317 are enriched in acidic residues; that stretch reads EPEESDEDDF.

It belongs to the universal ribosomal protein uL10 family. In terms of assembly, P0 forms a pentameric complex by interaction with dimers of P1 and P2. Post-translationally, phosphorylated.

In terms of biological role, ribosomal protein P0 is the functional equivalent of E.coli protein L10. The chain is Large ribosomal subunit protein uL10 (LIPO-A) from Leishmania infantum.